The primary structure comprises 1254 residues: AF4/FMR2 family member 3 (1254 aa).

Basic and acidic residues predominate over residues 45–62 (YEPDRNALRRKERERRSQ). 5 disordered regions span residues 45 to 90 (YEPD…GDEL), 139 to 190 (AESR…AAQQ), 261 to 324 (RPMD…GENN), 350 to 534 (EPSK…EGQD), and 552 to 752 (KTTC…SVGS). Polar residues-rich tracts occupy residues 67-76 (DSGSFNSGYS) and 143-158 (AQPQPSTVCSTASSTP). Residues 359-369 (KDSQLVSSGHS) show a composition bias toward polar residues. Over residues 406-418 (QQAAQRTALRALA) the composition is skewed to low complexity. Residues 421 to 433 (SVVQQTNCRGSAP) show a composition bias toward polar residues. Low complexity predominate over residues 441–472 (SSSSGGSSSSSDSESTSGSDSETESSSSSSES). Over residues 552-561 (KTTCKEEQRP) the composition is skewed to basic and acidic residues. Low complexity predominate over residues 577–605 (SPPAAVAVTAAALPPAVPSAPTESAPAPT). Positions 615–633 (RRTERTSAGDGANCHRPEE) are enriched in basic and acidic residues. Low complexity-rich tracts occupy residues 694–704 (TESSSSSSSSD) and 732–749 (AASSNNNSNSNSSTSRAS). At serine 782 the chain carries Phosphoserine. The interval 813–883 (PGVLSAPSAK…ASTNNTLSGN (71 aa)) is disordered. The segment covering 857-869 (REIKKVQGRKESA) has biased composition (basic and acidic residues). The segment covering 873 to 883 (AASTNNTLSGN) has biased composition (polar residues). Phosphoserine is present on serine 908. Disordered regions lie at residues 919-991 (ASED…HRDC) and 1128-1171 (AAQA…SGLS). 2 stretches are compositionally biased toward polar residues: residues 922 to 941 (DLTSSSRPHGNGLLTSASSN) and 960 to 985 (ASHNSSENGTLHSKSRPQTEPWSPGS). Composition is skewed to low complexity over residues 1132–1146 (PSPWGSSGKSTGSPS) and 1154–1171 (PASSVGSQGSLSSSSGLS).

It belongs to the AF4 family. As to expression, highest levels found in lymphoid tissues, lower levels in brain and lung.

The protein resides in the nucleus. Its function is as follows. Putative transcription activator that may function in lymphoid development and oncogenesis. This Mus musculus (Mouse) protein is AF4/FMR2 family member 3 (Aff3).